Reading from the N-terminus, the 509-residue chain is ATP synthase subunit alpha (509 aa).

Residue 169 to 176 (GDRQTGKT) participates in ATP binding.

Belongs to the ATPase alpha/beta chains family. F-type ATPases have 2 components, CF(1) - the catalytic core - and CF(0) - the membrane proton channel. CF(1) has five subunits: alpha(3), beta(3), gamma(1), delta(1), epsilon(1). CF(0) has three main subunits: a(1), b(2) and c(9-12). The alpha and beta chains form an alternating ring which encloses part of the gamma chain. CF(1) is attached to CF(0) by a central stalk formed by the gamma and epsilon chains, while a peripheral stalk is formed by the delta and b chains.

It localises to the cell inner membrane. It carries out the reaction ATP + H2O + 4 H(+)(in) = ADP + phosphate + 5 H(+)(out). Produces ATP from ADP in the presence of a proton gradient across the membrane. The alpha chain is a regulatory subunit. The polypeptide is ATP synthase subunit alpha (Brucella abortus (strain S19)).